A 288-amino-acid chain; its full sequence is MEIKLEQLGYCYQKNSPFEKRALLDVNVSFDSGSYSAIIGHTGSGKSTLLQHLNALLMPTEGKITVGDREIVAGVKQKKLRDLRKKVGIVFQFPEAQLFEETVEKDICFGPMNFGVSEEDAKLRAKKVIYEVGLTEEILSRSPFELSGGQMRRVAIAGVLAMDPEVLVLDEPTAGLDPHGREEIMEMFYNLHKEKGLTTVLVTHSMEDAARYAEKIVLMKAGTVLKIGSPREIFAKPDELVDLGLSVPDVVRFQGLFERKFNVKLTKTCLTIAELTAEMAPYLAKGGA.

One can recognise an ABC transporter domain in the interval 3–246 (IKLEQLGYCY…PDELVDLGLS (244 aa)). ATP is bound at residue 40–47 (GHTGSGKS).

It belongs to the ABC transporter superfamily. Energy-coupling factor EcfA family. In terms of assembly, forms a stable energy-coupling factor (ECF) transporter complex composed of 2 membrane-embedded substrate-binding proteins (S component), 2 ATP-binding proteins (A component) and 2 transmembrane proteins (T component).

The protein localises to the cell membrane. In terms of biological role, ATP-binding (A) component of a common energy-coupling factor (ECF) ABC-transporter complex. Unlike classic ABC transporters this ECF transporter provides the energy necessary to transport a number of different substrates. This Listeria innocua serovar 6a (strain ATCC BAA-680 / CLIP 11262) protein is Energy-coupling factor transporter ATP-binding protein EcfA2.